We begin with the raw amino-acid sequence, 595 residues long: NADH-quinone oxidoreductase subunit C/D (595 aa).

The interval 1-186 (MVTDNSKATD…TPYFLNNAKQ (186 aa)) is NADH dehydrogenase I subunit C. The interval 210-595 (DFMFLNLGPN…IDIVMADTDR (386 aa)) is NADH dehydrogenase I subunit D.

The protein in the N-terminal section; belongs to the complex I 30 kDa subunit family. It in the C-terminal section; belongs to the complex I 49 kDa subunit family. As to quaternary structure, NDH-1 is composed of 13 different subunits. Subunits NuoB, CD, E, F, and G constitute the peripheral sector of the complex.

It is found in the cell inner membrane. The catalysed reaction is a quinone + NADH + 5 H(+)(in) = a quinol + NAD(+) + 4 H(+)(out). In terms of biological role, NDH-1 shuttles electrons from NADH, via FMN and iron-sulfur (Fe-S) centers, to quinones in the respiratory chain. The immediate electron acceptor for the enzyme in this species is believed to be ubiquinone. Couples the redox reaction to proton translocation (for every two electrons transferred, four hydrogen ions are translocated across the cytoplasmic membrane), and thus conserves the redox energy in a proton gradient. This Psychrobacter sp. (strain PRwf-1) protein is NADH-quinone oxidoreductase subunit C/D.